The chain runs to 368 residues: ATP-dependent (S)-NAD(P)H-hydrate dehydratase (368 aa).

Residues Ser3 to Leu359 enclose the YjeF C-terminal domain. (6S)-NADPHX contacts are provided by residues Gly120 and Asn173–Arg179. ATP contacts are provided by residues Lys217–Asp221 and Gly236–Gly245. Residue Asp246 coordinates (6S)-NADPHX.

The protein belongs to the NnrD/CARKD family. The cofactor is Mg(2+).

It localises to the cytoplasm. It carries out the reaction (6S)-NADHX + ATP = ADP + phosphate + NADH + H(+). The enzyme catalyses (6S)-NADPHX + ATP = ADP + phosphate + NADPH + H(+). Its function is as follows. Catalyzes the dehydration of the S-form of NAD(P)HX at the expense of ATP, which is converted to ADP. Together with NAD(P)HX epimerase, which catalyzes the epimerization of the S- and R-forms, the enzyme allows the repair of both epimers of NAD(P)HX, a damaged form of NAD(P)H that is a result of enzymatic or heat-dependent hydration. The protein is ATP-dependent (S)-NAD(P)H-hydrate dehydratase of Ajellomyces capsulatus (strain G186AR / H82 / ATCC MYA-2454 / RMSCC 2432) (Darling's disease fungus).